The primary structure comprises 350 residues: tRNA pseudouridine synthase D (350 aa).

The Nucleophile role is filled by Asp-79. Residues 154–306 (GAPNYYGPQR…EQERRPIVLY (153 aa)) form the TRUD domain.

This sequence belongs to the pseudouridine synthase TruD family.

The enzyme catalyses uridine(13) in tRNA = pseudouridine(13) in tRNA. Responsible for synthesis of pseudouridine from uracil-13 in transfer RNAs. In Pseudoalteromonas atlantica (strain T6c / ATCC BAA-1087), this protein is tRNA pseudouridine synthase D.